The following is a 599-amino-acid chain: MKNIRNFSIIAHIDHGKSTLSDRIIQICGGLSDREMEAQVLDSMDLERERGITIKAQSVTLDFKASDGETYQLNFIDTPGHVDFSYEVSRSLAACEGALLVVDAGQGVEAQTLANCYTAMEMDLEVVPVLNKIDLPAADPERVAEEIEDIVGIDATDAVRCSAKTGVGVTDVLERLVRDIPPPQGDPDGPLQALIIDSWFDNYLGVVSLVRIKNGTMRKGDKIKVMSTGQTYNADRLGIFTPKQVDRTELKCGEVGWLVCAIKDILGAPVGDTLTSARNPAEKALPGFKKVKPQVYAGLFPVSSDDYESFRDALGKLSLNDASLFYEPESSSALGFGFRCGFLGLLHMEIIQERLEREYDLDLITTAPTVVYEVETTAKETIYVDSPSKLPPLNNIYELREPIAECHMLLPQAYLGNVITLCIEKRGVQTNMVYHGNQVALTYEIPMAEVVLDFFDRLKSTSRGYASLDYNFKRFQASDMVRVDVLINNERVDALALITHRDNSQSRGRELVEKMKDLIPRQQFDIAIQAAIGTHIIARSTVKQLRKNVLAKCYGGDISRKKKLLQKQKEGKKRMKQIGNVELPQEAFLAILHVGKDNK.

Positions 2-184 (KNIRNFSIIA…RLVRDIPPPQ (183 aa)) constitute a tr-type G domain. GTP contacts are provided by residues 14–19 (DHGKST) and 131–134 (NKID).

This sequence belongs to the TRAFAC class translation factor GTPase superfamily. Classic translation factor GTPase family. LepA subfamily.

It is found in the cell inner membrane. It carries out the reaction GTP + H2O = GDP + phosphate + H(+). Required for accurate and efficient protein synthesis under certain stress conditions. May act as a fidelity factor of the translation reaction, by catalyzing a one-codon backward translocation of tRNAs on improperly translocated ribosomes. Back-translocation proceeds from a post-translocation (POST) complex to a pre-translocation (PRE) complex, thus giving elongation factor G a second chance to translocate the tRNAs correctly. Binds to ribosomes in a GTP-dependent manner. The polypeptide is Elongation factor 4 (Salmonella agona (strain SL483)).